Consider the following 156-residue polypeptide: Small ribosomal subunit protein uS7 (156 aa).

It belongs to the universal ribosomal protein uS7 family. As to quaternary structure, part of the 30S ribosomal subunit. Contacts proteins S9 and S11.

Its function is as follows. One of the primary rRNA binding proteins, it binds directly to 16S rRNA where it nucleates assembly of the head domain of the 30S subunit. Is located at the subunit interface close to the decoding center, probably blocks exit of the E-site tRNA. This Geobacillus stearothermophilus (Bacillus stearothermophilus) protein is Small ribosomal subunit protein uS7 (rpsG).